A 421-amino-acid polypeptide reads, in one-letter code: Lipid II:glycine glycyltransferase (421 aa).

This sequence belongs to the FemABX family. In terms of assembly, monomer.

The protein localises to the cytoplasm. The catalysed reaction is beta-D-GlcNAc-(1-&gt;4)-Mur2Ac(oyl-L-Ala-D-isoglutaminyl-L-Lys-D-Ala-D-Ala)-di-trans,octa-cis-undecaprenyl diphosphate + glycyl-tRNA(Gly) = beta-D-GlcNAc-(1-&gt;4)-Mur2Ac(oyl-L-Ala-D-isoglutaminyl-L-Lys-(N(6)-Gly)-D-Ala-D-Ala)-di-trans,octa-cis-undecaprenyl diphosphate + tRNA(Gly) + H(+). Functionally, catalyzes the incorporation of the first glycine of the pentaglycine interpeptide bridge, which is characteristic of the S.aureus peptidoglycan. This glycine is added to the epsilon-amino group of the L-lysine of the membrane-bound lipid II intermediate (GlcNAc-(beta-1,4)-N-acetylmuramic acid(-L-Ala-D-iGln-L-Lys-D-Ala-D-Ala)-pyrophosphoryl-undecaprenol), using glycyl-tRNA(Gly) as donor, in a ribosome-independent mechanism. Involved in methicillin resistance. The sequence is that of Lipid II:glycine glycyltransferase (femX) from Staphylococcus aureus (strain COL).